We begin with the raw amino-acid sequence, 290 residues long: Glycine--tRNA ligase alpha subunit (290 aa).

This sequence belongs to the class-II aminoacyl-tRNA synthetase family. In terms of assembly, tetramer of two alpha and two beta subunits.

The protein localises to the cytoplasm. The enzyme catalyses tRNA(Gly) + glycine + ATP = glycyl-tRNA(Gly) + AMP + diphosphate. The protein is Glycine--tRNA ligase alpha subunit of Zymomonas mobilis subsp. mobilis (strain ATCC 31821 / ZM4 / CP4).